The sequence spans 372 residues: Cytochrome b (372 aa).

Transmembrane regions (helical) follow at residues 25–45 (FGSM…FLAI), 69–90 (WIMQ…YTHI), 105–125 (WLSG…GYVL), and 170–190 (FFAL…IHIM). Positions 75 and 89 each coordinate heme b. His-174 and His-188 together coordinate heme b. Residue His-193 coordinates a ubiquinone. The next 4 helical transmembrane spans lie at 218-238 (YKDM…MSFM), 280-300 (LGGT…PFTH), 312-332 (ITQV…WTAT), and 339-358 (FILI…IIHP).

This sequence belongs to the cytochrome b family. In terms of assembly, the cytochrome bc1 complex contains 3 respiratory subunits (MT-CYB, CYC1 and UQCRFS1), 2 core proteins (UQCRC1 and UQCRC2) and probably 6 low-molecular weight proteins. Heme b serves as cofactor.

The protein resides in the mitochondrion inner membrane. Its function is as follows. Component of the ubiquinol-cytochrome c reductase complex (complex III or cytochrome b-c1 complex) that is part of the mitochondrial respiratory chain. The b-c1 complex mediates electron transfer from ubiquinol to cytochrome c. Contributes to the generation of a proton gradient across the mitochondrial membrane that is then used for ATP synthesis. The chain is Cytochrome b (MT-CYB) from Pseudechis australis (Mulga snake).